Here is a 131-residue protein sequence, read N- to C-terminus: MDTSHTTKSCVLILLVALLCAERAQGLQCYECYGVPIETSCPAVTCRASDGFCIAQNIELIEDSQRRKLKTRQCLSFCPAGVPIRDPNIRERTSCCSEDLCNAAVPTAGSTWTMAGVLLFSLSSVVLQTLL.

The N-terminal stretch at 1–26 is a signal peptide; that stretch reads MDTSHTTKSCVLILLVALLCAERAQG. The UPAR/Ly6 domain occupies 27–115; it reads LQCYECYGVP…PTAGSTWTMA (89 aa). 5 disulfide bridges follow: Cys-29–Cys-53, Cys-32–Cys-41, Cys-46–Cys-74, Cys-78–Cys-95, and Cys-96–Cys-101. A lipid anchor (GPI-anchor amidated glycine) is attached at Gly-109. Positions 110–131 are cleaved as a propeptide — removed in mature form; sequence STWTMAGVLLFSLSSVVLQTLL.

Its subcellular location is the cell membrane. The protein is Lymphocyte antigen 6C1 (Ly6c1) of Mus musculus (Mouse).